Reading from the N-terminus, the 159-residue chain is Transcription elongation factor GreA (159 aa).

A coiled-coil region spans residues 47–73; sequence AEYDAAREEQSLTEAHIADLENKLSTA.

The protein belongs to the GreA/GreB family.

In terms of biological role, necessary for efficient RNA polymerase transcription elongation past template-encoded arresting sites. The arresting sites in DNA have the property of trapping a certain fraction of elongating RNA polymerases that pass through, resulting in locked ternary complexes. Cleavage of the nascent transcript by cleavage factors such as GreA or GreB allows the resumption of elongation from the new 3'terminus. GreA releases sequences of 2 to 3 nucleotides. This chain is Transcription elongation factor GreA, found in Chlorobium phaeobacteroides (strain DSM 266 / SMG 266 / 2430).